The chain runs to 370 residues: Proto-oncogene Wnt-1 (370 aa).

Positions 1-27 are cleaved as a signal peptide; sequence MGLWALLPGWVSATLLLALAALPAALA. Asparagine 29 is a glycosylation site (N-linked (GlcNAc...) asparagine). 11 cysteine pairs are disulfide-bonded: cysteine 93-cysteine 104, cysteine 143-cysteine 151, cysteine 153-cysteine 170, cysteine 218-cysteine 232, cysteine 220-cysteine 227, cysteine 299-cysteine 330, cysteine 315-cysteine 325, cysteine 329-cysteine 369, cysteine 345-cysteine 360, cysteine 347-cysteine 357, and cysteine 352-cysteine 353. Serine 224 carries the O-palmitoleoyl serine; by PORCN lipid modification. Residues asparagine 316 and asparagine 346 are each glycosylated (N-linked (GlcNAc...) asparagine). An N-linked (GlcNAc...) asparagine glycan is attached at asparagine 359.

The protein belongs to the Wnt family. As to quaternary structure, forms a soluble 1:1 complex with AFM; this prevents oligomerization and is required for prolonged biological activity. The complex with AFM may represent the physiological form in body fluids. Interacts with PORCN. Interacts with RSPO1, RSPO2 and RSPO3. Interacts with WLS. Palmitoleoylation is required for efficient binding to frizzled receptors. Palmitoleoylation is necessary for proper trafficking to cell surface. Depalmitoleoylated by NOTUM, leading to inhibit Wnt signaling pathway.

It is found in the secreted. The protein resides in the extracellular space. It localises to the extracellular matrix. In terms of biological role, ligand for members of the frizzled family of seven transmembrane receptors. Acts in the canonical Wnt signaling pathway by promoting beta-catenin-dependent transcriptional activation. In some developmental processes, is also a ligand for the coreceptor RYK, thus triggering Wnt signaling. Plays an essential role in the development of the embryonic brain and central nervous system (CNS). Has a role in osteoblast function, bone development and bone homeostasis. The chain is Proto-oncogene Wnt-1 (WNT1) from Homo sapiens (Human).